A 425-amino-acid chain; its full sequence is Glutamate-1-semialdehyde 2,1-aminomutase (425 aa).

Lys264 carries the post-translational modification N6-(pyridoxal phosphate)lysine.

Belongs to the class-III pyridoxal-phosphate-dependent aminotransferase family. HemL subfamily. Homodimer. It depends on pyridoxal 5'-phosphate as a cofactor.

The protein resides in the cytoplasm. It carries out the reaction (S)-4-amino-5-oxopentanoate = 5-aminolevulinate. It participates in porphyrin-containing compound metabolism; protoporphyrin-IX biosynthesis; 5-aminolevulinate from L-glutamyl-tRNA(Glu): step 2/2. In Campylobacter lari (strain RM2100 / D67 / ATCC BAA-1060), this protein is Glutamate-1-semialdehyde 2,1-aminomutase.